Here is a 359-residue protein sequence, read N- to C-terminus: MALTLEELVKRFGGEIAGDAQCKVGGLAPLDQAGPQQLAFLANPKYLSQVESTRAGAVLIAPKDLEKLGAAAAGRNFIVTPNPYAYFARVAQMFIDLATPPRAAGVHPSATIDPAATVAATAVIGPHVTIEAGAVIEDGVQLDANVFVGRGTTIGAGSHFYPNASVYHGCKIGPRAIVHAGAVIGSDGFGFAPDFVGDGDARTGSWVKIPQVGGVTIGPDVEIGANTTIDRGAMADTVIEECVKIDNQVQIGHNCRIGAYTVIAGSAGIAGSTTIGRHCMIGGAAGIAGHVTLGDYVIITAKSGVSKSLPKAGIYTSAFPAVDHGEWNKSAALVRNLDKLRERIKALEAALAAQGGTHA.

His253 functions as the Proton acceptor in the catalytic mechanism.

It belongs to the transferase hexapeptide repeat family. LpxD subfamily. As to quaternary structure, homotrimer.

The enzyme catalyses a UDP-3-O-[(3R)-3-hydroxyacyl]-alpha-D-glucosamine + a (3R)-hydroxyacyl-[ACP] = a UDP-2-N,3-O-bis[(3R)-3-hydroxyacyl]-alpha-D-glucosamine + holo-[ACP] + H(+). Its pathway is bacterial outer membrane biogenesis; LPS lipid A biosynthesis. In terms of biological role, catalyzes the N-acylation of UDP-3-O-acylglucosamine using 3-hydroxyacyl-ACP as the acyl donor. Is involved in the biosynthesis of lipid A, a phosphorylated glycolipid that anchors the lipopolysaccharide to the outer membrane of the cell. This chain is UDP-3-O-acylglucosamine N-acyltransferase, found in Burkholderia cenocepacia (strain ATCC BAA-245 / DSM 16553 / LMG 16656 / NCTC 13227 / J2315 / CF5610) (Burkholderia cepacia (strain J2315)).